The sequence spans 337 residues: MTDSPRLYSGMQPSADSLHLGNYVGALLQWKELQAAHDAFFSVVDLHAITVAQDPHDLREKTRRTAAQYIAAGIDPSVSTLYVQSHVPAHAQLAWVLSTITGYGEAARMTQFKDKSAKQGAEATSVGLFTYPVLMAADILLFDADVVPVGDDQRQHVELTRDLAERFNSRFGETFVVPQAMILKDGARIYDLQSPESKMSKSADSGAGIVWLLDEPDIARKKIMRAVTDTDGVVSYDRAGKPGVSNLLSIYSALSGRAIQQIELDYEGKGYGDFKKGLVEVVVDALGPIRERTLELLADPAELDRILAGNAARAGEAAEITLAKAYEAIGFLQPTRR.

ATP is bound by residues 12–14 (QPS) and 21–22 (GN). Residues 13 to 22 (PSADSLHLGN) carry the 'HIGH' region motif. D138 lines the L-tryptophan pocket. ATP-binding positions include 150–152 (GDD), I189, and 198–202 (KMSKS). A 'KMSKS' region motif is present at residues 198–202 (KMSKS).

This sequence belongs to the class-I aminoacyl-tRNA synthetase family. In terms of assembly, homodimer.

It localises to the cytoplasm. The enzyme catalyses tRNA(Trp) + L-tryptophan + ATP = L-tryptophyl-tRNA(Trp) + AMP + diphosphate + H(+). Its function is as follows. Catalyzes the attachment of tryptophan to tRNA(Trp). In Leifsonia xyli subsp. xyli (strain CTCB07), this protein is Tryptophan--tRNA ligase.